We begin with the raw amino-acid sequence, 204 residues long: Probable GTP-binding protein EngB (204 aa).

The tract at residues 1–21 (MKVSSAEFVTSGTRPAHYPPP) is disordered. The region spanning 22-194 (ELPEVAFAGR…WARIEVMLAA (173 aa)) is the EngB-type G domain. GTP contacts are provided by residues 30 to 37 (GRSNVGKS), 57 to 61 (GRTQL), 75 to 78 (DLPG), 142 to 145 (TKCD), and 173 to 175 (FSA). Mg(2+) contacts are provided by Ser-37 and Thr-59.

The protein belongs to the TRAFAC class TrmE-Era-EngA-EngB-Septin-like GTPase superfamily. EngB GTPase family. Mg(2+) is required as a cofactor.

In terms of biological role, necessary for normal cell division and for the maintenance of normal septation. The chain is Probable GTP-binding protein EngB from Geobacter metallireducens (strain ATCC 53774 / DSM 7210 / GS-15).